Consider the following 142-residue polypeptide: Large ribosomal subunit protein uL13 (142 aa).

The protein belongs to the universal ribosomal protein uL13 family. In terms of assembly, part of the 50S ribosomal subunit.

In terms of biological role, this protein is one of the early assembly proteins of the 50S ribosomal subunit, although it is not seen to bind rRNA by itself. It is important during the early stages of 50S assembly. This is Large ribosomal subunit protein uL13 from Agathobacter rectalis (strain ATCC 33656 / DSM 3377 / JCM 17463 / KCTC 5835 / VPI 0990) (Eubacterium rectale).